We begin with the raw amino-acid sequence, 305 residues long: Orotidine 5'-phosphate decarboxylase (305 aa).

The Proton donor role is filled by Lys-108.

The protein belongs to the OMP decarboxylase family. Type 2 subfamily.

The enzyme catalyses orotidine 5'-phosphate + H(+) = UMP + CO2. Its pathway is pyrimidine metabolism; UMP biosynthesis via de novo pathway; UMP from orotate: step 2/2. In Caldicellulosiruptor bescii (strain ATCC BAA-1888 / DSM 6725 / KCTC 15123 / Z-1320) (Anaerocellum thermophilum), this protein is Orotidine 5'-phosphate decarboxylase.